The primary structure comprises 291 residues: Probable peptide ABC transporter permease protein y4tQ (291 aa).

The next 5 membrane-spanning stretches (helical) occupy residues 28 to 48 (LVLL…AAPL), 92 to 112 (LIVG…IGVI), 137 to 157 (LLAI…IVAI), 213 to 233 (ATVC…GVGV), and 249 to 269 (LFLA…AVTV). One can recognise an ABC transmembrane type-1 domain in the interval 88–276 (ARISLIVGLL…VTVLAVNLLG (189 aa)).

Belongs to the binding-protein-dependent transport system permease family. OppBC subfamily.

The protein localises to the cell inner membrane. Its function is as follows. Probably part of the binding-protein-dependent transport system y4tOPQRS for a peptide. Probably responsible for the translocation of the substrate across the membrane. The polypeptide is Probable peptide ABC transporter permease protein y4tQ (Sinorhizobium fredii (strain NBRC 101917 / NGR234)).